We begin with the raw amino-acid sequence, 369 residues long: 2-aminoethylphosphonate--pyruvate transaminase (369 aa).

At K193 the chain carries N6-(pyridoxal phosphate)lysine.

Belongs to the class-V pyridoxal-phosphate-dependent aminotransferase family. PhnW subfamily. In terms of assembly, homodimer. Requires pyridoxal 5'-phosphate as cofactor.

It carries out the reaction (2-aminoethyl)phosphonate + pyruvate = phosphonoacetaldehyde + L-alanine. In terms of biological role, involved in phosphonate degradation. In Pseudomonas fluorescens (strain ATCC BAA-477 / NRRL B-23932 / Pf-5), this protein is 2-aminoethylphosphonate--pyruvate transaminase.